The sequence spans 350 residues: Anthranilate phosphoribosyltransferase (350 aa).

5-phospho-alpha-D-ribose 1-diphosphate-binding positions include Gly88, 91-92, Thr96, 98-101, 116-124, and Ser128; these read GD, NIST, and KHGGRSVSS. Gly88 is an anthranilate binding site. Ser100 contacts Mg(2+). Arg174 serves as a coordination point for anthranilate. Residues Asp233 and Glu234 each contribute to the Mg(2+) site.

This sequence belongs to the anthranilate phosphoribosyltransferase family. In terms of assembly, homodimer. Requires Mg(2+) as cofactor.

It catalyses the reaction N-(5-phospho-beta-D-ribosyl)anthranilate + diphosphate = 5-phospho-alpha-D-ribose 1-diphosphate + anthranilate. Its pathway is amino-acid biosynthesis; L-tryptophan biosynthesis; L-tryptophan from chorismate: step 2/5. Its function is as follows. Catalyzes the transfer of the phosphoribosyl group of 5-phosphorylribose-1-pyrophosphate (PRPP) to anthranilate to yield N-(5'-phosphoribosyl)-anthranilate (PRA). This Albidiferax ferrireducens (strain ATCC BAA-621 / DSM 15236 / T118) (Rhodoferax ferrireducens) protein is Anthranilate phosphoribosyltransferase.